The chain runs to 311 residues: Malate dehydrogenase (311 aa).

NAD(+)-binding positions include 7–13 and D34; that span reads GAAGGIG. Substrate is bound by residues R81 and R87. Residues N94 and 117 to 119 each bind NAD(+); that span reads ITN. Substrate contacts are provided by N119 and R153. H177 (proton acceptor) is an active-site residue. M227 lines the NAD(+) pocket.

It belongs to the LDH/MDH superfamily. MDH type 1 family. As to quaternary structure, homodimer.

The catalysed reaction is (S)-malate + NAD(+) = oxaloacetate + NADH + H(+). Functionally, catalyzes the reversible oxidation of malate to oxaloacetate. The sequence is that of Malate dehydrogenase from Shewanella sp. (strain MR-4).